We begin with the raw amino-acid sequence, 669 residues long: DNA mismatch repair protein MutL (669 aa).

The interval 356 to 377 is disordered; the sequence is FEQRQNTENNQEKTFSSEESNS. The span at 361 to 377 shows a compositional bias: polar residues; that stretch reads NTENNQEKTFSSEESNS.

Belongs to the DNA mismatch repair MutL/HexB family.

Its function is as follows. This protein is involved in the repair of mismatches in DNA. It is required for dam-dependent methyl-directed DNA mismatch repair. May act as a 'molecular matchmaker', a protein that promotes the formation of a stable complex between two or more DNA-binding proteins in an ATP-dependent manner without itself being part of a final effector complex. The chain is DNA mismatch repair protein MutL from Staphylococcus aureus (strain MSSA476).